A 1372-amino-acid chain; its full sequence is DNA-directed RNA polymerase subunit beta (1372 aa).

The protein belongs to the RNA polymerase beta chain family. In terms of assembly, the RNAP catalytic core consists of 2 alpha, 1 beta, 1 beta' and 1 omega subunit. When a sigma factor is associated with the core the holoenzyme is formed, which can initiate transcription.

It catalyses the reaction RNA(n) + a ribonucleoside 5'-triphosphate = RNA(n+1) + diphosphate. In terms of biological role, DNA-dependent RNA polymerase catalyzes the transcription of DNA into RNA using the four ribonucleoside triphosphates as substrates. The chain is DNA-directed RNA polymerase subunit beta from Nitratidesulfovibrio vulgaris (strain ATCC 29579 / DSM 644 / CCUG 34227 / NCIMB 8303 / VKM B-1760 / Hildenborough) (Desulfovibrio vulgaris).